Reading from the N-terminus, the 390-residue chain is Probable inactive secreted aspartyl protease (390 aa).

The signal sequence occupies residues 1 to 20; the sequence is MQLTIKALVGILTTISAATA. The propeptide at 21–69 is removed in mature form; sequence VSFDMENLGAEKRGVSGEELHMLHGNEVLARFANGVYPEVANGTRVSKR. N-linked (GlcNAc...) asparagine glycosylation is present at asparagine 62. The region spanning 86-388 is the Peptidase A1 domain; it reads WAVKAKIGSN…KFDSNEMQIA (303 aa). Catalysis depends on residues aspartate 104 and aspartate 273. Cysteine 313 and cysteine 346 form a disulfide bridge.

This sequence belongs to the peptidase A1 family.

The protein localises to the secreted. Probable inactive secreted aspartyl protease. May promote an inflammatory immune response in the host when the host skin barrier is breached. Has no detectable protease activity in vitro on fluorogenic substrates, a peptide library, or with the general protease substrate casein. The presence of the enzyme also does not affect the activity of the secreted aspartyl protease SAP1. The sequence is that of Probable inactive secreted aspartyl protease from Malassezia globosa (strain ATCC MYA-4612 / CBS 7966) (Dandruff-associated fungus).